A 190-amino-acid chain; its full sequence is UPF0200 protein OE_4442F (190 aa).

8-15 is an ATP binding site; it reads GMPGSGKS. Positions 120-144 are disordered; it reads ARIEDRDRPGDTDGEPLDAREDRER.

It belongs to the UPF0200 family.

In Halobacterium salinarum (strain ATCC 29341 / DSM 671 / R1), this protein is UPF0200 protein OE_4442F.